The sequence spans 421 residues: 4-hydroxy-3-methylbut-2-en-1-yl diphosphate synthase (flavodoxin) (421 aa).

[4Fe-4S] cluster contacts are provided by Cys311, Cys314, Cys357, and Glu364.

This sequence belongs to the IspG family. The cofactor is [4Fe-4S] cluster.

The catalysed reaction is (2E)-4-hydroxy-3-methylbut-2-enyl diphosphate + oxidized [flavodoxin] + H2O + 2 H(+) = 2-C-methyl-D-erythritol 2,4-cyclic diphosphate + reduced [flavodoxin]. It participates in isoprenoid biosynthesis; isopentenyl diphosphate biosynthesis via DXP pathway; isopentenyl diphosphate from 1-deoxy-D-xylulose 5-phosphate: step 5/6. In terms of biological role, converts 2C-methyl-D-erythritol 2,4-cyclodiphosphate (ME-2,4cPP) into 1-hydroxy-2-methyl-2-(E)-butenyl 4-diphosphate. In Xanthomonas euvesicatoria pv. vesicatoria (strain 85-10) (Xanthomonas campestris pv. vesicatoria), this protein is 4-hydroxy-3-methylbut-2-en-1-yl diphosphate synthase (flavodoxin).